A 473-amino-acid chain; its full sequence is ATP synthase subunit beta (473 aa).

Glycine 158–threonine 165 contacts ATP.

Belongs to the ATPase alpha/beta chains family. In terms of assembly, F-type ATPases have 2 components, CF(1) - the catalytic core - and CF(0) - the membrane proton channel. CF(1) has five subunits: alpha(3), beta(3), gamma(1), delta(1), epsilon(1). CF(0) has three main subunits: a(1), b(2) and c(9-12). The alpha and beta chains form an alternating ring which encloses part of the gamma chain. CF(1) is attached to CF(0) by a central stalk formed by the gamma and epsilon chains, while a peripheral stalk is formed by the delta and b chains.

The protein resides in the cell membrane. The enzyme catalyses ATP + H2O + 4 H(+)(in) = ADP + phosphate + 5 H(+)(out). Functionally, produces ATP from ADP in the presence of a proton gradient across the membrane. The catalytic sites are hosted primarily by the beta subunits. This chain is ATP synthase subunit beta, found in Carboxydothermus hydrogenoformans (strain ATCC BAA-161 / DSM 6008 / Z-2901).